A 341-amino-acid chain; its full sequence is S-adenosylmethionine:tRNA ribosyltransferase-isomerase (341 aa).

This sequence belongs to the QueA family. In terms of assembly, monomer.

Its subcellular location is the cytoplasm. The catalysed reaction is 7-aminomethyl-7-carbaguanosine(34) in tRNA + S-adenosyl-L-methionine = epoxyqueuosine(34) in tRNA + adenine + L-methionine + 2 H(+). The protein operates within tRNA modification; tRNA-queuosine biosynthesis. Functionally, transfers and isomerizes the ribose moiety from AdoMet to the 7-aminomethyl group of 7-deazaguanine (preQ1-tRNA) to give epoxyqueuosine (oQ-tRNA). In Staphylococcus saprophyticus subsp. saprophyticus (strain ATCC 15305 / DSM 20229 / NCIMB 8711 / NCTC 7292 / S-41), this protein is S-adenosylmethionine:tRNA ribosyltransferase-isomerase.